Here is a 656-residue protein sequence, read N- to C-terminus: MAKDTFYITTPIYYPSGNLHIGHAYSTVAGDVIARYKRMQGYDVRYLTGTDEHGQKIQEKAQKAGKTELEYLDEMISGIKNLWSKLEISNDDFIRTTEERHKQVVEKVFERLLKQGDIYLGEYEGWYSVPDETYYTESQLVDPVYENGKIVGGKSPDSGHEVELVKEESYFFNINKYTDRLLEFYDENPDFIQPPSRKNEMINNFIKPGLEDLAVSRTSFDWGVRVPSNPKHVVYVWIDALVNYISSLGYLSDDETLFNKYWPADIHLMAKEIVRFHSIIWPILLMALDLPLPKKVFAHGWILMKDGKMSKSKGNVVDPNVLIDRYGLDATRYYLMRELPFGSDGVFTPEAFVERTNYDLANDLGNLVNRTISMINKYFHGELPAYQGPKHELDEKMEAMALETVKSFNDNMESLQFSVALSTVWKFISRTNKYIDETQPWVLAKDENQREMLGNVMAHLVENIRFATILLQPFLTHAPREIFKQLNINNPDLHQLDSLQQYGMLSEAITVTEKPTPIFPRLDTEAEIAYIKESMQPPKSIKQSDEPGKEQIDIKDFDKVEIKAATIIDAENVKKSEKLLKIKVELDNEQRQIVSGIAKFYRPEDIIGKKVAVVTNLKPAKLMGQKSEGMILSAEKDGVLTLISLPSAIPNGAVIK.

Positions 13–23 match the 'HIGH' region motif; that stretch reads YYPSGNLHIGH. The 'KMSKS' region motif lies at 308–312; that stretch reads KMSKS. Lys-311 provides a ligand contact to ATP. Residues 556 to 656 enclose the tRNA-binding domain; it reads DFDKVEIKAA…SAIPNGAVIK (101 aa).

It belongs to the class-I aminoacyl-tRNA synthetase family. MetG type 2B subfamily. In terms of assembly, homodimer.

The protein resides in the cytoplasm. The catalysed reaction is tRNA(Met) + L-methionine + ATP = L-methionyl-tRNA(Met) + AMP + diphosphate. Functionally, is required not only for elongation of protein synthesis but also for the initiation of all mRNA translation through initiator tRNA(fMet) aminoacylation. In Staphylococcus epidermidis (strain ATCC 12228 / FDA PCI 1200), this protein is Methionine--tRNA ligase.